An 883-amino-acid chain; its full sequence is Translation initiation factor IF-2 (883 aa).

Disordered regions lie at residues 1–96 and 132–259; these read MVDT…RSGM and QRRA…RGRL. Over residues 57–66 the composition is skewed to low complexity; the sequence is PAEPAAAAPE. Over residues 72 to 87 the composition is skewed to pro residues; it reads TPAPPAVSPRQQPRPS. Over residues 132–188 the composition is skewed to basic and acidic residues; that stretch reads QRRAAQELVDKAEREAAEVRRKAEEERHRHEEETKRKAETEAKKRFGEAEPAKKPAD. Low complexity predominate over residues 191-217; that stretch reads PASTSTTTTAPRAPVTTTTRPPAVAAE. The tr-type G domain maps to 380–551; that stretch reads PRSPVVTVMG…ALQAELLDLK (172 aa). Positions 389-396 are G1; it reads GHVDHGKT. 389–396 is a binding site for GTP; that stretch reads GHVDHGKT. The segment at 414-418 is G2; that stretch reads GITQH. Positions 437–440 are G3; the sequence is DTPG. Residues 437-441 and 491-494 contribute to the GTP site; these read DTPGH and NKID. Positions 491 to 494 are G4; sequence NKID. The tract at residues 527 to 529 is G5; sequence SAK.

Belongs to the TRAFAC class translation factor GTPase superfamily. Classic translation factor GTPase family. IF-2 subfamily.

The protein localises to the cytoplasm. Functionally, one of the essential components for the initiation of protein synthesis. Protects formylmethionyl-tRNA from spontaneous hydrolysis and promotes its binding to the 30S ribosomal subunits. Also involved in the hydrolysis of GTP during the formation of the 70S ribosomal complex. This is Translation initiation factor IF-2 from Rhodopseudomonas palustris (strain BisB5).